Reading from the N-terminus, the 540-residue chain is Mitochondrial distribution and morphology protein 34 (540 aa).

The region spanning 1–208 is the SMP-LTD domain; it reads MSFKFNSGTF…LPSVIFNMSQ (208 aa). 2 disordered regions span residues 26–51 and 379–399; these read ALNP…KKPK and RSKS…SGSL. Residues 35 to 44 show a composition bias toward polar residues; sequence PESTSGQDGS.

The protein belongs to the MDM34 family. In terms of assembly, component of the ER-mitochondria encounter structure (ERMES) or MDM complex, composed of MMM1, MDM10, MDM12 and MDM34.

The protein resides in the mitochondrion outer membrane. Its function is as follows. Component of the ERMES/MDM complex, which serves as a molecular tether to connect the endoplasmic reticulum (ER) and mitochondria. Components of this complex are involved in the control of mitochondrial shape and protein biogenesis, and function in nonvesicular lipid trafficking between the ER and mitochondria. MDM34 is required for the interaction of the ER-resident membrane protein MMM1 and the outer mitochondrial membrane-resident beta-barrel protein MDM10. The polypeptide is Mitochondrial distribution and morphology protein 34 (Kluyveromyces lactis (strain ATCC 8585 / CBS 2359 / DSM 70799 / NBRC 1267 / NRRL Y-1140 / WM37) (Yeast)).